A 733-amino-acid polypeptide reads, in one-letter code: LMBR1 domain-containing protein 2 homolog A (733 aa).

5 helical membrane-spanning segments follow: residues 1 to 21 (MIVI…KILH), 33 to 53 (VYIS…LVPI), 125 to 145 (FYFG…SFVL), 163 to 183 (AYLY…LLAV), and 191 to 211 (MVGF…IILM). The stretch at 232-266 (LKHLQFKAVELLNSKKKANEELIATMKVIRRIQEK) forms a coiled coil. A run of 4 helical transmembrane segments spans residues 386–406 (AAIV…ALAF), 423–443 (VSNI…ALTC), 468–488 (SIIF…YNFI), and 513–533 (VAPF…VIVC). Disordered regions lie at residues 581 to 641 (NNIK…TSSA), 649 to 668 (LKKS…PYEQ), and 674 to 696 (ESND…TYNA). Over residues 596–619 (DSTSNNPKQIFKSGSTTISKQSPP) the composition is skewed to polar residues. 2 stretches are compositionally biased toward low complexity: residues 620–640 (NLNV…NTSS) and 654–664 (NNNNNNNNNNN). The span at 674–685 (ESNDFDDDDDIE) shows a compositional bias: acidic residues.

The protein belongs to the LIMR family.

The protein localises to the membrane. The sequence is that of LMBR1 domain-containing protein 2 homolog A from Dictyostelium discoideum (Social amoeba).